We begin with the raw amino-acid sequence, 343 residues long: Dihydroorotase (343 aa).

Zn(2+) is bound by residues His14 and His16. Substrate-binding positions include 16–18 and Asn42; that span reads HVR. 3 residues coordinate Zn(2+): Lys98, His135, and His173. Lys98 bears the N6-carboxylysine mark. His135 contacts substrate. Leu219 contacts substrate. Residue Asp247 participates in Zn(2+) binding. Asp247 is an active-site residue. Residues His251 and Ala263 each contribute to the substrate site.

It belongs to the metallo-dependent hydrolases superfamily. DHOase family. Class II DHOase subfamily. As to quaternary structure, homodimer. Requires Zn(2+) as cofactor.

The enzyme catalyses (S)-dihydroorotate + H2O = N-carbamoyl-L-aspartate + H(+). It functions in the pathway pyrimidine metabolism; UMP biosynthesis via de novo pathway; (S)-dihydroorotate from bicarbonate: step 3/3. In terms of biological role, catalyzes the reversible cyclization of carbamoyl aspartate to dihydroorotate. The polypeptide is Dihydroorotase (Marinobacter nauticus (strain ATCC 700491 / DSM 11845 / VT8) (Marinobacter aquaeolei)).